A 246-amino-acid polypeptide reads, in one-letter code: Zorya protein ZorB (246 aa).

Residues 20-40 (FWISYADLMTAMMVLFLVVMV) form a helical membrane-spanning segment. The OmpA-like domain maps to 86-218 (CHDNRISFGE…RVELRMQFFG (133 aa)).

The protein belongs to the MotB family.

Its subcellular location is the cell inner membrane. In terms of biological role, component of antiviral defense system Zorya type I, composed of ZorA, ZorB, ZorC and ZorD. Expression of Zorya type I in E.coli (strain MG1655) confers 10,000-fold resistance to phage SECphi27, 100-fold resistance to lambda, and 10-fold resistance to T7. While most T7 infected Zorya-containing cells undergo abortive infection, a minority produce viable phage progeny. These eventually accumulate to a high multiplicity of infection, leading to culture collapse by 2 hours after initial infection. ZorA and ZorB probably assemble in the cell inner membrane and exert their effect there. This is Zorya protein ZorB from Escherichia coli O139:H28 (strain E24377A / ETEC).